A 108-amino-acid polypeptide reads, in one-letter code: ATP-dependent Clp protease adapter protein ClpS (108 aa).

Basic and acidic residues predominate over residues 1-15; sequence MPRESSPDSHHEHGV. Residues 1 to 24 are disordered; it reads MPRESSPDSHHEHGVAVEPARPEV.

It belongs to the ClpS family. Binds to the N-terminal domain of the chaperone ClpA.

Its function is as follows. Involved in the modulation of the specificity of the ClpAP-mediated ATP-dependent protein degradation. This Stenotrophomonas maltophilia (strain R551-3) protein is ATP-dependent Clp protease adapter protein ClpS.